Consider the following 464-residue polypeptide: Cysteine--tRNA ligase (464 aa).

Cys-28 is a binding site for Zn(2+). A 'HIGH' region motif is present at residues 30-40; it reads VTVYDFCHIGH. Cys-209, His-234, and Glu-238 together coordinate Zn(2+). The 'KMSKS' region signature appears at 266-270; sequence KMSKS. Residue Lys-269 coordinates ATP.

This sequence belongs to the class-I aminoacyl-tRNA synthetase family. Monomer. The cofactor is Zn(2+).

It is found in the cytoplasm. It carries out the reaction tRNA(Cys) + L-cysteine + ATP = L-cysteinyl-tRNA(Cys) + AMP + diphosphate. The protein is Cysteine--tRNA ligase (cysS) of Buchnera aphidicola subsp. Acyrthosiphon pisum (strain APS) (Acyrthosiphon pisum symbiotic bacterium).